Reading from the N-terminus, the 377-residue chain is Probable purine permease 22 (377 aa).

Helical transmembrane passes span 39–59, 71–91, 107–127, 128–148, 166–186, 202–222, 238–258, 283–303, 309–329, and 338–358; these read WLRV…ATVL, TYVV…FRFF, SPSF…VSAY, AYLS…LILA, FTPL…LLVV, VIGF…LSLI, VLDL…IGLF, TLAS…GLIF, FSNS…VIVF, and IFSI…HYLD.

Belongs to the purine permeases (TC 2.A.7.14) family.

It localises to the membrane. This Arabidopsis thaliana (Mouse-ear cress) protein is Probable purine permease 22 (PUP22).